The sequence spans 378 residues: MQDFLPFSRPAIGDAEISAVCDVLKSGWITTGPKNHELEQQFCDTFGCQHAVALCSATAGMHVTLLALGIGPGDEVITPSQTWVSTINIITLLGAEPVFVDVDPDTLMTSAELIAPLITANTKAIIPVHYAGAPVDLDPILALARRHGIAVIEDAAHAVGTRYRERWIGASGTAIFSFHAIKNLTCAEGGMLVTDDKALADKVRMLKFHGLGVDAFDRMSLGRKPQAEVITPGFKYNLADINAAIALVQLARLPELNAKRAELVARYQERLAGLPLAPLAVPGYPHLHTWHLFMVRVDPDRCGLDRDQLMQALQERGIGTGLHFRAAHTQKYYRERYPTLSLPHTEWNSSRLCTLPLFPDMTLADVDRVVAALIDILE.

Lys-182 carries the post-translational modification N6-(pyridoxal phosphate)lysine.

This sequence belongs to the DegT/DnrJ/EryC1 family. ArnB subfamily. As to quaternary structure, homodimer. Pyridoxal 5'-phosphate serves as cofactor.

It catalyses the reaction UDP-4-amino-4-deoxy-beta-L-arabinose + 2-oxoglutarate = UDP-beta-L-threo-pentopyranos-4-ulose + L-glutamate. Its pathway is nucleotide-sugar biosynthesis; UDP-4-deoxy-4-formamido-beta-L-arabinose biosynthesis; UDP-4-deoxy-4-formamido-beta-L-arabinose from UDP-alpha-D-glucuronate: step 2/3. It functions in the pathway bacterial outer membrane biogenesis; lipopolysaccharide biosynthesis. Catalyzes the conversion of UDP-4-keto-arabinose (UDP-Ara4O) to UDP-4-amino-4-deoxy-L-arabinose (UDP-L-Ara4N). The modified arabinose is attached to lipid A and is required for resistance to polymyxin and cationic antimicrobial peptides. The sequence is that of UDP-4-amino-4-deoxy-L-arabinose--oxoglutarate aminotransferase from Aeromonas hydrophila subsp. hydrophila (strain ATCC 7966 / DSM 30187 / BCRC 13018 / CCUG 14551 / JCM 1027 / KCTC 2358 / NCIMB 9240 / NCTC 8049).